The primary structure comprises 437 residues: UDP-glucose 6-dehydrogenase (437 aa).

NAD(+) is bound by residues Val11, Asp30, Lys35, Thr86, Thr122, and Glu155. Residues 151–155 (EFLRE), Lys209, Asn213, 254–258 (FLHAG), and Gly262 each bind substrate. Cys265 functions as the Nucleophile in the catalytic mechanism. Residue Lys268 participates in NAD(+) binding. Lys326 provides a ligand contact to substrate. Arg333 is a binding site for NAD(+).

This sequence belongs to the UDP-glucose/GDP-mannose dehydrogenase family.

It carries out the reaction UDP-alpha-D-glucose + 2 NAD(+) + H2O = UDP-alpha-D-glucuronate + 2 NADH + 3 H(+). The protein operates within nucleotide-sugar biosynthesis; UDP-alpha-D-glucuronate biosynthesis; UDP-alpha-D-glucuronate from UDP-alpha-D-glucose: step 1/1. It participates in capsule biogenesis; capsule polysaccharide biosynthesis. In Rhizobium meliloti (strain 1021) (Ensifer meliloti), this protein is UDP-glucose 6-dehydrogenase.